Consider the following 527-residue polypeptide: PTS system maltose-specific EIICB component (527 aa).

The region spanning 1 to 418 (MMQKIQRFGS…FNIATPGREK (418 aa)) is the PTS EIIC type-1 domain. Transmembrane regions (helical) follow at residues 8-28 (FGSAMFVPVLLFAFAGIIVGI), 59-79 (GWTVFNQMPLLFAIGIPVALA), 93-113 (VYLTFNYFVSAILTVWGGAFG), 132-152 (IKTLDTNIIGAIFISSIVVFL), 173-193 (YIVMISFFIMIPIALAVSYIW), 200-220 (IGSLQSFLVASGAVGVWIYTF), 224-244 (ILIPTGLHHFIYTPFIYGPAV), 276-296 (FALHGNSKIFGIPGIALAFYV), 305-325 (LVAGLLIPVTLTAIVAGITEP), 326-346 (IEFTFLFISPFLFAVHAVLAA), 357-377 (VVGNMGGGLIEAVTLNWIPLF), and 382-402 (MTYVYQILIGLSFTAIYFFVF). One can recognise a PTS EIIB type-1 domain in the interval 449 to 527 (DDTAFLYIEA…RERVEKILNQ (79 aa)). Cys471 functions as the Phosphocysteine intermediate; for EIIB activity in the catalytic mechanism.

Its subcellular location is the cell membrane. It catalyses the reaction D-maltose(out) + N(pros)-phospho-L-histidyl-[protein] = alpha-maltose 6'-phosphate(in) + L-histidyl-[protein]. Functionally, the phosphoenolpyruvate-dependent sugar phosphotransferase system (sugar PTS), a major carbohydrate active transport system, catalyzes the phosphorylation of incoming sugar substrates concomitantly with their translocation across the cell membrane. This system is involved in maltose transport. This chain is PTS system maltose-specific EIICB component, found in Bacillus subtilis (strain 168).